A 131-amino-acid chain; its full sequence is Histone H2B.1 (131 aa).

The span at 1-20 (MAPPKAEKKPASKAPAEKKP) shows a compositional bias: basic and acidic residues. Residues 1–39 (MAPPKAEKKPASKAPAEKKPAAKKTASATDSKKRTKTRK) form a disordered region. Residues K8 and K9 each carry the N6-acetyllysine; alternate modification. Glycyl lysine isopeptide (Lys-Gly) (interchain with G-Cter in SUMO); alternate cross-links involve residues K8 and K9. S12 is subject to Phosphoserine. K13 carries the post-translational modification N6-acetyllysine. K18 bears the N6-acetyllysine; alternate mark. K18 is covalently cross-linked (Glycyl lysine isopeptide (Lys-Gly) (interchain with G-Cter in SUMO); alternate). K19 participates in a covalent cross-link: Glycyl lysine isopeptide (Lys-Gly) (interchain with G-Cter in SUMO). K125 is covalently cross-linked (Glycyl lysine isopeptide (Lys-Gly) (interchain with G-Cter in ubiquitin)).

This sequence belongs to the histone H2B family. As to quaternary structure, the nucleosome is a histone octamer containing two molecules each of H2A, H2B, H3 and H4 assembled in one H3-H4 heterotetramer and two H2A-H2B heterodimers. The octamer wraps approximately 147 bp of DNA. In terms of processing, monoubiquitinated to form H2BK123ub1. H2BK123ub1 gives a specific tag for epigenetic transcriptional activation and is also prerequisite for H3K4me and H3K79me formation. H2BK123ub1 also modulates the formation of double-strand breaks during meiosis and is a prerequisite for DNA-damage checkpoint activation. Phosphorylated by STE20 to form H2BS10ph during progression through meiotic prophase. May be correlated with chromosome condensation. Post-translationally, acetylated by GCN5 to form H2BK11ac and H2BK16ac. H2BK16ac can also be formed by ESA1. Acetylation of N-terminal lysines and particularly formation of H2BK11acK16ac has a positive effect on transcription. In terms of processing, sumoylation to form H2BK6su or H2BK7su, and probably also H2BK16su or H2BK17su, occurs preferentially near the telomeres and represses gene transcription.

The protein resides in the nucleus. The protein localises to the chromosome. Functionally, core component of nucleosome. Nucleosomes wrap and compact DNA into chromatin, limiting DNA accessibility to the cellular machineries which require DNA as a template. Histones thereby play a central role in transcription regulation, DNA repair, DNA replication and chromosomal stability. DNA accessibility is regulated via a complex set of post-translational modifications of histones, also called histone code, and nucleosome remodeling. The chain is Histone H2B.1 (HTB1) from Scheffersomyces stipitis (strain ATCC 58785 / CBS 6054 / NBRC 10063 / NRRL Y-11545) (Yeast).